Here is a 354-residue protein sequence, read N- to C-terminus: L-Lys-D/L-Arg epimerase (354 aa).

Substrate contacts are provided by residues threonine 135 and 160-162 (KIK). Aspartate 190, glutamate 215, and aspartate 240 together coordinate Mg(2+). Substrate-binding positions include lysine 265, aspartate 295, and 318–320 (DLD).

Belongs to the mandelate racemase/muconate lactonizing enzyme family. The cofactor is Mg(2+).

In terms of biological role, catalyzes the epimerization of L-Lys-L-Arg to L-Lys-D-Arg (in vitro). Catalyzes the epimerization of positively charged dipeptides, with a preference for substrates with a basic amino acid in the second position. Has epimerase activity with L-Lys-L-Lys, L-Arg-L-Arg, L-Val-L-Arg, L-Val-L-Lys and L-Ala-L-Arg (in vitro). This Desulforapulum autotrophicum (strain ATCC 43914 / DSM 3382 / VKM B-1955 / HRM2) (Desulfobacterium autotrophicum) protein is L-Lys-D/L-Arg epimerase.